The following is a 389-amino-acid chain: Succinate--CoA ligase [ADP-forming] subunit beta (389 aa).

The ATP-grasp domain maps to 9–244; that stretch reads KQLFAEYGLP…PSQEDEREAH (236 aa). ATP-binding positions include Lys-46, 53 to 55, Glu-99, Thr-102, and Glu-107; that span reads GRG. Positions 199 and 213 each coordinate Mg(2+). Substrate contacts are provided by residues Asn-264 and 321 to 323; that span reads GIV.

This sequence belongs to the succinate/malate CoA ligase beta subunit family. In terms of assembly, heterotetramer of two alpha and two beta subunits. Mg(2+) serves as cofactor.

It catalyses the reaction succinate + ATP + CoA = succinyl-CoA + ADP + phosphate. It carries out the reaction GTP + succinate + CoA = succinyl-CoA + GDP + phosphate. The protein operates within carbohydrate metabolism; tricarboxylic acid cycle; succinate from succinyl-CoA (ligase route): step 1/1. Its function is as follows. Succinyl-CoA synthetase functions in the citric acid cycle (TCA), coupling the hydrolysis of succinyl-CoA to the synthesis of either ATP or GTP and thus represents the only step of substrate-level phosphorylation in the TCA. The beta subunit provides nucleotide specificity of the enzyme and binds the substrate succinate, while the binding sites for coenzyme A and phosphate are found in the alpha subunit. This is Succinate--CoA ligase [ADP-forming] subunit beta from Teredinibacter turnerae (strain ATCC 39867 / T7901).